Here is a 331-residue protein sequence, read N- to C-terminus: POU domain, class 4, transcription factor 3 (331 aa).

Residues Thr-81 to Pro-97 show a composition bias toward low complexity. The segment at Thr-81 to Thr-108 is disordered. The region spanning Asp-172–Glu-249 is the POU-specific domain. The segment at residues Arg-267–Lys-326 is a DNA-binding region (homeobox).

The protein belongs to the POU transcription factor family. Class-4 subfamily. As to quaternary structure, interaction with ISL1. Expressed in the nervous system. Expressed in the otic vesicle during embryogenesis. Expressed in the adult retina in a subset of retinal ganglion cells (RGCs), and at a lower level in the adult tectum. Not expressed in the adult olfactory bulb.

The protein resides in the nucleus. Its subcellular location is the cytoplasm. In terms of biological role, acts as a transcriptional activator. Acts by binding to sequences related to the consensus octamer motif 5'-ATGCAAAT-3' in the regulatory regions of its target genes. May play a role in specifying terminally differentiated neuronal phenotypes. This is POU domain, class 4, transcription factor 3 (pou4f3) from Danio rerio (Zebrafish).